The primary structure comprises 373 residues: Schlafen-like protein 1 (373 aa).

The tract at residues 1 to 67 is disordered; sequence MAALFEENDS…ELSSEEVDIP (67 aa). Positions 247 to 373 are SLFN-like fold; sequence KAGAKIEFRT…NQVYRLESSV (127 aa).

It belongs to the Schlafen family. In terms of assembly, component of the trimeric PUCH (precursor of 21U RNA 5'-end cleavage holoenzyme) complex; consisting of tofu-1, tofu-2 and either slfl-3 or slfl-4; which is required for processing of piRNA precursors. Within the complex, interacts (via N-terminus) with tofu-2 (via N-terminus); the interaction stabilizes tofu-2 and may form a functional nuclease. Within the complex, required for the interaction of tofu-2 (via N-terminus) with slfl-3 (via N-terminus). Interacts (via residues 82-172) with the PETISCO complex subunit tofu-6 (via residues 120-314); the interaction between the PETISCO and PUCH complex members enhances piRNA production in vivo. As to expression, expressed in the germline.

It is found in the cytoplasm. Its function is as follows. Component of the trimeric PUCH (precursor of 21U RNA 5'-end cleavage holoenzyme) complex, that acts as an endoribonuclease processing the 5'-end of precursor Piwi-interacting RNAs (piRNAs). The PUCH complex consists of tofu-1, tofu-2 and either slfl-3 or slfl-4, with tofu-2 exhibiting endoribonuclease activity. PUCH-mediated processing strictly requires a 7-methyl-G cap (m7 G-cap) and an uracil at position three (U3). PUCH also exhibits a strict bias for piRNA precursors with an A or G at position 1. Mature piRNA production is enhanced by the interaction of PUCH with the PETISCO complex, which is stabilizing piRNA precursors and allows their processing by PUCH. This chain is Schlafen-like protein 1, found in Caenorhabditis elegans.